Reading from the N-terminus, the 151-residue chain is Differentiation-associated protein 2 (151 aa).

An N-terminal signal peptide occupies residues 1–22 (MKQIIRLITTLLLLSLIGITCA).

The protein resides in the endoplasmic reticulum. Its subcellular location is the vacuole. Has an essential role in the initiation of differentiation. Also required for cAMP signaling. In Dictyostelium discoideum (Social amoeba), this protein is Differentiation-associated protein 2 (dia2).